The following is a 431-amino-acid chain: Glutamate-1-semialdehyde 2,1-aminomutase (431 aa).

Residue Lys269 is modified to N6-(pyridoxal phosphate)lysine.

The protein belongs to the class-III pyridoxal-phosphate-dependent aminotransferase family. HemL subfamily. Homodimer. Pyridoxal 5'-phosphate serves as cofactor.

It localises to the cytoplasm. It catalyses the reaction (S)-4-amino-5-oxopentanoate = 5-aminolevulinate. It functions in the pathway porphyrin-containing compound metabolism; protoporphyrin-IX biosynthesis; 5-aminolevulinate from L-glutamyl-tRNA(Glu): step 2/2. The sequence is that of Glutamate-1-semialdehyde 2,1-aminomutase from Tolumonas auensis (strain DSM 9187 / NBRC 110442 / TA 4).